The following is a 474-amino-acid chain: Cysteine--tRNA ligase (474 aa).

Residue Cys-30 participates in Zn(2+) binding. The 'HIGH' region motif lies at 32 to 42 (PTVYNFAHIGN). Zn(2+) contacts are provided by Cys-212, His-237, and Glu-241. Residues 270–274 (KMSKS) carry the 'KMSKS' region motif. Position 273 (Lys-273) interacts with ATP.

Belongs to the class-I aminoacyl-tRNA synthetase family. In terms of assembly, monomer. Zn(2+) is required as a cofactor.

The protein resides in the cytoplasm. The enzyme catalyses tRNA(Cys) + L-cysteine + ATP = L-cysteinyl-tRNA(Cys) + AMP + diphosphate. The chain is Cysteine--tRNA ligase from Leptospira borgpetersenii serovar Hardjo-bovis (strain JB197).